We begin with the raw amino-acid sequence, 189 residues long: Elongation factor P (189 aa).

This sequence belongs to the elongation factor P family.

The protein localises to the cytoplasm. It participates in protein biosynthesis; polypeptide chain elongation. In terms of biological role, involved in peptide bond synthesis. Stimulates efficient translation and peptide-bond synthesis on native or reconstituted 70S ribosomes in vitro. Probably functions indirectly by altering the affinity of the ribosome for aminoacyl-tRNA, thus increasing their reactivity as acceptors for peptidyl transferase. The polypeptide is Elongation factor P (Pseudomonas putida (strain ATCC 700007 / DSM 6899 / JCM 31910 / BCRC 17059 / LMG 24140 / F1)).